We begin with the raw amino-acid sequence, 354 residues long: Protein angel (354 aa).

Residues 22–59 form a disordered region; that stretch reads VSSQAKGASGKRKQKAKEMESSHDRNRRWTSLGNQAEG.

Belongs to the CCR4/nocturin family. In terms of tissue distribution, ubiquitously expressed in embryos.

This is Protein angel (angel) from Drosophila melanogaster (Fruit fly).